The following is a 1050-amino-acid chain: DNA-directed RNA polymerase subunit beta (1050 aa).

The protein belongs to the RNA polymerase beta chain family. In terms of assembly, in plastids the minimal PEP RNA polymerase catalytic core is composed of four subunits: alpha, beta, beta', and beta''. When a (nuclear-encoded) sigma factor is associated with the core the holoenzyme is formed, which can initiate transcription (Potential).

The protein resides in the plastid. Its subcellular location is the apicoplast. It catalyses the reaction RNA(n) + a ribonucleoside 5'-triphosphate = RNA(n+1) + diphosphate. Functionally, DNA-dependent RNA polymerase catalyzes the transcription of DNA into RNA using the four ribonucleoside triphosphates as substrates. The protein is DNA-directed RNA polymerase subunit beta (rpoB) of Neospora caninum (Coccidian parasite).